The primary structure comprises 226 residues: UPF0758 protein SUB0843 (226 aa).

An MPN domain is found at 103–225; the sequence is QILSSYQVAK…YYSFREKSDI (123 aa). Zn(2+)-binding residues include histidine 174, histidine 176, and aspartate 187. The short motif at 174–187 is the JAMM motif element; it reads HNHPSGLTNPSEND.

It belongs to the UPF0758 family.

This chain is UPF0758 protein SUB0843, found in Streptococcus uberis (strain ATCC BAA-854 / 0140J).